The sequence spans 558 residues: Polysialic acid transport protein KpsD (558 aa).

A signal peptide spans 1–20 (MKLFKSILLIAACHAAQASA).

The protein to E.coli K1 KpsD.

Its subcellular location is the periplasm. Its function is as follows. Involved in the translocation of the polysialic acid capsule across the outer membrane to the cell surface. May function as the periplasmic binding element of the PSA transport system, in which it transiently interacts with the membrane component of the transporter, binds polysaccharide and transports the polymer to a component in the outer membrane. The chain is Polysialic acid transport protein KpsD (kpsD) from Escherichia coli.